We begin with the raw amino-acid sequence, 233 residues long: NAD-dependent protein deacylase (233 aa).

One can recognise a Deacetylase sirtuin-type domain in the interval 1-230; that stretch reads MKNIMILSGA…ALDIENFMKD (230 aa). 9-28 contributes to the NAD(+) binding site; that stretch reads GAGLSAPSGLKTFRDNDGLW. Substrate is bound by residues Tyr53 and Arg56. NAD(+) is bound at residue 88-91; it reads QNVD. The active-site Proton acceptor is His106. 4 residues coordinate Zn(2+): Cys114, Cys117, Cys133, and Cys136. NAD(+) contacts are provided by residues 172-174 and Ile213; that span reads GTS.

The protein belongs to the sirtuin family. Class III subfamily. It depends on Zn(2+) as a cofactor.

It is found in the cytoplasm. It catalyses the reaction N(6)-acetyl-L-lysyl-[protein] + NAD(+) + H2O = 2''-O-acetyl-ADP-D-ribose + nicotinamide + L-lysyl-[protein]. The enzyme catalyses N(6)-succinyl-L-lysyl-[protein] + NAD(+) + H2O = 2''-O-succinyl-ADP-D-ribose + nicotinamide + L-lysyl-[protein]. Functionally, NAD-dependent lysine deacetylase and desuccinylase that specifically removes acetyl and succinyl groups on target proteins. Modulates the activities of several proteins which are inactive in their acylated form. The chain is NAD-dependent protein deacylase from Campylobacter jejuni (strain RM1221).